A 959-amino-acid polypeptide reads, in one-letter code: Bifunctional premutilin synthase (959 aa).

A class II diterpene cyclase region spans residues M1–D542. Residues D309–M312 carry the DXDD motif motif. D311 acts as the For class II diterpene cyclase activity in catalysis. The tract at residues P543 to H959 is class I diterpene synthase. D649 (for class I diterpene synthase activity) is an active-site residue. Positions 649, 653, and 824 each coordinate Mg(2+). Residues D649 to D653 carry the DDXXD motif motif. The segment at K931 to H959 is disordered. Over residues N940–H959 the composition is skewed to polar residues.

This sequence belongs to the terpene synthase family. The cofactor is Mg(2+).

It participates in secondary metabolite biosynthesis; terpenoid biosynthesis. Functionally, bifunctional premutilin synthase; part of the gene cluster that mediates the biosynthesis of pleuromutilin, a tricyclic diterpene showing antibacterial properties. The geranylgeranyl diphosphate (GGPP) synthase catalyzes the first step in pleuromutilin biosynthesis. GGPP is then substrate of the premutilin synthase (PS) to yield premutilin. Premutilin synthase is a bifunctional enzyme composed of the fusion of a class II diterpene cyclase (DTC) and a class I diterpene synthase (DTS), with the corresponding domains and active sites containing characteristic aspartate-rich motifs. GGPP is first converted to mutildienyl-diphosphate (MPP) at the class II DTC site. MPP is subsequently further cyclized at the class I DTS site, followed by a 1,5-hydride shift and addition of water prior to terminating deprotonation, to yield premutilin. In addition to the aforementioned GGPP synthase and bifunctional diterpene synthase, the cluster also contains three cytochrome P450 monooxygenases, a short-chain alcohol dehydrogenase, and an acyltransferase, involved in the conversion of premutilin to pleuromutilin. The cytochrome P450 monooxygenases P450-1 and P450-2 hydroxylate premutilin at C-11 and C-3, respectively, producing 11-hydroxypremutilin and 3-hydroxypremutilin. The combination of the actions of both ple5 and ple6 leads to the production of 3,11-dihydroxypremutilin. The short chain dehydrogenase SDR further converts 3,11-dihydroxypremutilin into mutilin. The acetyltransferase ATF then acetylates mutilin to produce 14-O-acetylmutilin. Finally, the cytochrome P450 monooxygenase P450-3 catalyzes hydroxylation on the alpha position of the acetyl side chain of 14-O-acetylmutilin to yield pleuromutilin. The chain is Bifunctional premutilin synthase from Clitopilus passeckerianus (Pleurotus passeckerianus).